Here is a 392-residue protein sequence, read N- to C-terminus: Monooxygenase AgnR1 (392 aa).

The signal sequence occupies residues 1–20 (MSAPQKCAAVVVGAGPAGLA). Residue Asn-134 is glycosylated (N-linked (GlcNAc...) asparagine).

Functionally, monooxygenase; part of the gene cluster that mediates the biosynthesis of agnestins, dihydroxy-xanthone metabolites. The pathway begins with the assembly and cyclization of atrochrysone thioester by the non-reducing polyketide synthase Agnpks1. The atrochrysone carboxyl ACP thioesterase AgnL7 then breaks the thioester bond and releases the atrochrysone carboxylic acid as the first enzyme-free intermediate. The decarboxylase AgnL1 then catalyzes the concerted decarboxylation-elimination required to convert atochrysone carboxylic acid into emodin anthrone, which is further oxidized to emodin by the anthrone oxygenase AgnL2. Emodin then undergoes reduction catalyzed by the oxidoreductase AgnL4 to yield the dihydroquinone tautomer which is the substrate for reduction by the short chain dehydrogenase AgnL6 reduction to produce hydroxyketone, followed by AgnL8 dehydration and likely spontaneous autoxidation to chrysophanol. Baeyer-Villiger oxidation by the oxidase AgnL3 leads to monodictyphenone via cleavage of the C-10/C-10a bond of chrysophanol. Alternative cleavage at the C-4a/C-10 bond of chrysophanol also leads to the formation some cephalone F. Further conversion to agnestins A and B, requires reduction to dihydro-monodictyphenone, oxidation to agnestin C probably via an epoxide, and rearrangement to either agnestin A or agnestin B directly, although agnestin A or agnestin B can also interconvert. Within the cluster, AgnR1 is the only unassigned oxidoreductase present which could be involved in this conversion. However, AgnR1 seems not to be involved in this step, and thus genes involved in the proposed oxidation/reduction may be located elsewhere on the genome. Further agnestin A derivatives are probably formed by spontaneous decarboxylations, dehydrations and methanolysis reactions. In Paecilomyces divaricatus (Penicillium divaricatum), this protein is Monooxygenase AgnR1.